The following is a 79-amino-acid chain: Defensin-like protein 117 (79 aa).

The signal sequence occupies residues 1–24 (MTTTKTMLVAFVLTLFFVISSVHC). Disulfide bonds link Cys40–Cys75, Cys46–Cys68, Cys53–Cys73, and Cys57–Cys74.

Belongs to the DEFL family.

It localises to the secreted. The chain is Defensin-like protein 117 from Arabidopsis thaliana (Mouse-ear cress).